A 491-amino-acid polypeptide reads, in one-letter code: Cobyric acid synthase (491 aa).

The 177-residue stretch at 253-429 folds into the GATase cobBQ-type domain; that stretch reads AHRVAVVRLP…WHGSLEGDAL (177 aa). C334 acts as the Nucleophile in catalysis. H421 is a catalytic residue.

This sequence belongs to the CobB/CobQ family. CobQ subfamily.

Its pathway is cofactor biosynthesis; adenosylcobalamin biosynthesis. Functionally, catalyzes amidations at positions B, D, E, and G on adenosylcobyrinic A,C-diamide. NH(2) groups are provided by glutamine, and one molecule of ATP is hydrogenolyzed for each amidation. This Mycobacterium ulcerans (strain Agy99) protein is Cobyric acid synthase.